The primary structure comprises 151 residues: Ribosome maturation factor RimP (151 aa).

It belongs to the RimP family.

It is found in the cytoplasm. In terms of biological role, required for maturation of 30S ribosomal subunits. The chain is Ribosome maturation factor RimP from Vibrio cholerae serotype O1 (strain ATCC 39541 / Classical Ogawa 395 / O395).